Here is a 615-residue protein sequence, read N- to C-terminus: Probable ATP-citrate synthase subunit 1 (615 aa).

ATP contacts are provided by residues 221-241 (LIRF…EVGG) and 272-298 (FKTE…KNQA). Glu238 contributes to the Mg(2+) binding site. His280 acts as the Tele-phosphohistidine intermediate in catalysis. 299–309 (MREAGIYVPET) lines the CoA pocket. Phosphoserine is present on Ser359.

The protein belongs to the succinate/malate CoA ligase alpha subunit family. As to quaternary structure, composed of two subunits.

The protein localises to the cytoplasm. It catalyses the reaction oxaloacetate + acetyl-CoA + ADP + phosphate = citrate + ATP + CoA. Its function is as follows. Catalyzes the formation of cytosolic acetyl-CoA, which is mainly used for the biosynthesis of fatty acids and sterols. This is Probable ATP-citrate synthase subunit 1 from Schizosaccharomyces pombe (strain 972 / ATCC 24843) (Fission yeast).